Reading from the N-terminus, the 64-residue chain is Conotoxin Mr3.5 (64 aa).

Positions 1 to 19 are cleaved as a signal peptide; that stretch reads MSKLGVLLTICLLLFPLTA. The propeptide occupies 20-46; the sequence is LPLDGDQPADQRAERTQAEKHSLPDPR. 3 cysteine pairs are disulfide-bonded: cysteine 49-cysteine 58, cysteine 50-cysteine 62, and cysteine 54-cysteine 63. Cysteine 63 carries the post-translational modification Cysteine amide.

The protein belongs to the conotoxin M superfamily. As to expression, expressed by the venom duct.

The protein resides in the secreted. The polypeptide is Conotoxin Mr3.5 (Conus marmoreus (Marble cone)).